Reading from the N-terminus, the 206-residue chain is MFKDRPDRSDEVVLVGRSNVGKSTLMRAVTGHQVPTGQKPGVTRQPNHFDWASEDFMLTDLPGFGYMQGVEDGHEEAIKTEVVRYVESHADNIMVGVLVLDGKAAVDIIDRHSGGDEIPHVVELYYLLEELGVQPVVAVNKMDKVDDRDERLNDIADRLGLYPPWEQWQDVIAPITAKKDRIAALEDAVNSHFDAAKRDDLKQFFS.

Residues 8–195 (RSDEVVLVGR…EDAVNSHFDA (188 aa)) enclose the EngB-type G domain. Residues 16-23 (GRSNVGKS), 41-45 (GVTRQ), 60-63 (DLPG), 140-143 (NKMD), and 175-177 (ITA) each bind GTP. Positions 23 and 43 each coordinate Mg(2+).

It belongs to the TRAFAC class TrmE-Era-EngA-EngB-Septin-like GTPase superfamily. EngB GTPase family. Mg(2+) is required as a cofactor.

Necessary for normal cell division and for the maintenance of normal septation. The sequence is that of Probable GTP-binding protein EngB from Halobacterium salinarum (strain ATCC 29341 / DSM 671 / R1).